We begin with the raw amino-acid sequence, 320 residues long: Nucleoporin Nup37 (320 aa).

4 WD repeats span residues 67–113 (KEQR…FTSL), 118–157 (GHGDYVNDVSWVCDGELLASVSDDFTCRFWTTTGGGENVI), 160–200 (GLSS…TVIS), and 203–242 (SPKFPLMSADWAHSNRLFITSLAGGDVVTWDLNRPYVPAD).

It is found in the nucleus. Its subcellular location is the nuclear pore complex. In terms of biological role, as part of the nuclear pore complex (NPC), has a role in its assembly and function. (Microbial infection) Required for optimal replication of E.chaffeensis. In Drosophila melanogaster (Fruit fly), this protein is Nucleoporin Nup37.